The sequence spans 603 residues: Elongation factor 4 (603 aa).

Positions 7–189 constitute a tr-type G domain; that stretch reads SRIRNFSIIA…SIVQLVPPPQ (183 aa). GTP is bound by residues 19 to 24 and 136 to 139; these read DHGKST and NKID.

The protein belongs to the TRAFAC class translation factor GTPase superfamily. Classic translation factor GTPase family. LepA subfamily.

The protein resides in the cell inner membrane. It catalyses the reaction GTP + H2O = GDP + phosphate + H(+). Functionally, required for accurate and efficient protein synthesis under certain stress conditions. May act as a fidelity factor of the translation reaction, by catalyzing a one-codon backward translocation of tRNAs on improperly translocated ribosomes. Back-translocation proceeds from a post-translocation (POST) complex to a pre-translocation (PRE) complex, thus giving elongation factor G a second chance to translocate the tRNAs correctly. Binds to ribosomes in a GTP-dependent manner. This Microcystis aeruginosa (strain NIES-843 / IAM M-2473) protein is Elongation factor 4.